The primary structure comprises 69 residues: Toxin Tma3 (69 aa).

The region spanning 2–66 (KDDYPVDTAK…SPTKKSGRCN (65 aa)) is the LCN-type CS-alpha/beta domain. 4 cysteine pairs are disulfide-bonded: Cys-14–Cys-65, Cys-18–Cys-41, Cys-27–Cys-48, and Cys-31–Cys-50.

The protein belongs to the long (4 C-C) scorpion toxin superfamily. Sodium channel inhibitor family. In terms of tissue distribution, expressed by the venom gland.

The protein localises to the secreted. Functionally, inhibits voltage-gated sodium channels (Nav). This toxin shows insect lethality against crickets. The polypeptide is Toxin Tma3 (Tityus macrochirus (Scorpion)).